We begin with the raw amino-acid sequence, 368 residues long: MNKKTIVVKFGTSTLTQGSPKLNSPHMMEIVRQIAQLHNDGFRIVIVTSGAIAAGRHYLNHPQLPPTIASKQLLAAVGQSQLIQAWEKLFAIYDIHIGQLLLTRADIEDRERFLNARDTLHALLDNHIIPVINENDAVATAEIKVGDNDNLSALVAILVQAEQLYLLTDQQGLFDSDPRKNPEAKLIPVVEQITDHIRSIAGGSGTNLGTGGMMTKIIAADVATRSGIETIIAPGNRPNVIADLAYEQNIGTKFIAHQSDRLESRKQWLFAAPSAGIITIDNGAQNAILEQNKSLLPAGIINVEGRFSRGEVVKIRTQSGKDIALGMPRYNSDALQLIKGRKSADIENVLGYEYGAVAMHRDDMIILS.

Position 9 (Lys-9) interacts with ATP. Residues Ser-49, Asp-136, and Asn-148 each coordinate substrate. Residues 168–169 (TD) and 210–216 (TGGMMTK) contribute to the ATP site. One can recognise a PUA domain in the interval 275–353 (AGIITIDNGA…ADIENVLGYE (79 aa)).

This sequence belongs to the glutamate 5-kinase family.

It is found in the cytoplasm. The enzyme catalyses L-glutamate + ATP = L-glutamyl 5-phosphate + ADP. It functions in the pathway amino-acid biosynthesis; L-proline biosynthesis; L-glutamate 5-semialdehyde from L-glutamate: step 1/2. Its function is as follows. Catalyzes the transfer of a phosphate group to glutamate to form L-glutamate 5-phosphate. The polypeptide is Glutamate 5-kinase (Haemophilus influenzae (strain PittEE)).